Consider the following 313-residue polypeptide: Olfactory receptor 1G1 (313 aa).

Residues 1–25 (MEGKNLTSISEFFLLGFSEQLEEQK) lie on the Extracellular side of the membrane. N-linked (GlcNAc...) asparagine glycosylation occurs at N5. A helical membrane pass occupies residues 26-49 (ALFGSFLFMYLVMVAGNLLIILVI). Over 50 to 57 (ITDTQLHT) the chain is Cytoplasmic. The chain crosses the membrane as a helical span at residues 58 to 79 (PMYFFLANLSLADACFVSTTVP). Residues 80-100 (KMLANIQIQSQAISYSGCLLQ) are Extracellular-facing. A disulfide bridge links C97 with C189. A helical membrane pass occupies residues 101–120 (LYFFMLFVMLEAFLLAVMAY). The Cytoplasmic segment spans residues 121-140 (DHYVAICHPLHYILIMSPGL). A helical transmembrane segment spans residues 141 to 158 (CVFLVSASWIMNALYSLL). Topologically, residues 159-196 (HTLLMNSLSFCANHEIPHFFCDIDPLLSLSCADPFTNE) are extracellular. A helical transmembrane segment spans residues 197 to 219 (LVIFITGGLTGLICVLCLIISYT). The Cytoplasmic segment spans residues 220–236 (NVFSTILKIPSAQGKRK). The chain crosses the membrane as a helical span at residues 237 to 259 (AFSTCSSHLSVVSLFXGTSFCVY). The Extracellular segment spans residues 260 to 272 (FSPPSTRXAQKDT). Residues 273-292 (VASVMYTVVTPMLNPFIYSL) form a helical membrane-spanning segment. Topologically, residues 293–313 (RNQEIKSSLRKLIWVRKIHSP) are cytoplasmic.

It belongs to the G-protein coupled receptor 1 family.

It localises to the cell membrane. In terms of biological role, odorant receptor. In Pan troglodytes (Chimpanzee), this protein is Olfactory receptor 1G1 (OR1G1).